The following is a 116-amino-acid chain: Small ribosomal subunit protein bS16 (116 aa).

Belongs to the bacterial ribosomal protein bS16 family.

In Chlamydia muridarum (strain MoPn / Nigg), this protein is Small ribosomal subunit protein bS16.